We begin with the raw amino-acid sequence, 375 residues long: Pulmonary surfactant-associated protein D (375 aa).

An N-terminal signal peptide occupies residues 1–21; the sequence is MLLFLLSALVLLTQSLGYLEA. S-nitrosocysteine is present on residues cysteine 35 and cysteine 40. A disordered region spans residues 43-221; sequence VESGLPGRDG…DKGAKGESGL (179 aa). Residues 46 to 222 enclose the Collagen-like domain; sequence GLPGRDGRDG…KGAKGESGLP (177 aa). Residues 50-65 are compositionally biased toward basic and acidic residues; it reads RDGRDGREGPRGEKGD. The residue at position 78 (proline 78) is a 4-hydroxyproline. At lysine 87 the chain carries 5-hydroxylysine. A glycan (N-linked (GlcNAc...) asparagine) is linked at asparagine 90. Residue proline 96 is modified to 4-hydroxyproline. Lysine 99 is modified (5-hydroxylysine). Over residues 105 to 114 the composition is skewed to pro residues; sequence SGPPGPPGVP. 2 stretches are compositionally biased toward low complexity: residues 116–132 and 138–150; these read PAGR…IGPQ and KGEA…VGAP. 4-hydroxyproline occurs at positions 171 and 177. Positions 173–189 are enriched in low complexity; that stretch reads ERGAPGNAGAAGSAGVM. Positions 204 to 216 are enriched in basic and acidic residues; the sequence is KGDKGVPGDKGAK. Residues 223-251 adopt a coiled-coil conformation; the sequence is DVASLRQQVEALQKQVQHLQAAFSQYKKV. Residues 260 to 374 enclose the C-type lectin domain; sequence VGEKIFKTAG…CGEKRLVVCE (115 aa). 2 disulfide bridges follow: cysteine 281–cysteine 373 and cysteine 351–cysteine 365.

This sequence belongs to the SFTPD family. In terms of assembly, oligomeric complex of 4 set of homotrimers. In terms of processing, hydroxylation on proline residues within the sequence motif, GXPG, is most likely to be 4-hydroxy as this fits the requirement for 4-hydroxylation in vertebrates. Post-translationally, S-nitrosylation at Cys-35 and Cys-40 alters the quaternary structure which results in a pro-inflammatory chemoattractive signaling activity with macrophages.

The protein localises to the secreted. The protein resides in the extracellular space. It is found in the extracellular matrix. It localises to the surface film. Functionally, contributes to the lung's defense against inhaled microorganisms, organic antigens and toxins. Interacts with compounds such as bacterial lipopolysaccharides, oligosaccharides and fatty acids and modulates leukocyte action in immune response. May participate in the extracellular reorganization or turnover of pulmonary surfactant. Binds strongly maltose residues and to a lesser extent other alpha-glucosyl moieties. This is Pulmonary surfactant-associated protein D (SFTPD) from Macaca mulatta (Rhesus macaque).